The chain runs to 128 residues: Large ribosomal subunit protein bL20c (128 aa).

This sequence belongs to the bacterial ribosomal protein bL20 family.

It localises to the plastid. The protein resides in the chloroplast. Its function is as follows. Binds directly to 23S ribosomal RNA and is necessary for the in vitro assembly process of the 50S ribosomal subunit. It is not involved in the protein synthesizing functions of that subunit. The protein is Large ribosomal subunit protein bL20c of Trachelium caeruleum (Blue throatwort).